The sequence spans 135 residues: Protein PsiE homolog (135 aa).

The next 4 helical transmembrane spans lie at 14 to 34 (LQTI…IFLV), 54 to 74 (YQLI…ALIV), 82 to 102 (HFPL…LIIV), and 107 to 127 (PSDT…LYLA).

The protein belongs to the PsiE family.

The protein localises to the cell inner membrane. This chain is Protein PsiE homolog, found in Pectobacterium atrosepticum (strain SCRI 1043 / ATCC BAA-672) (Erwinia carotovora subsp. atroseptica).